The sequence spans 383 residues: Plant intracellular Ras-group-related LRR protein 8 (383 aa).

LRR repeat units follow at residues 56–79 (RQNIKTLDLSGMSLASLSASSINL), 80–102 (ASISKLDLSNNNIQKIPESLVAR), 104–126 (LNLWALDLQSNQLKTLPNSIGCL), 127–149 (SKLKFLNVSGNYLQSLPKTIEDC), 151–173 (SLEELNANFNELTRLPDAIGFEL), 174–197 (TNLTKLSVNSNKLVLLPNSVSYLT), 199–219 (LRVLDARLNRLSSLPEDLENL), 221–244 (NLQVLNVSQNFQHLTTLPYSVGLL), 245–268 (ISLVELDVSYNGITVLPDSLGCLR), and 270–290 (IQKLSVEGNPLISPPFEVVEQ). The GVYW; degenerate signature appears at 291–298 (GLEALKQY).

This sequence belongs to the SHOC2 family. As to expression, widely expressed except flowers.

Functionally, leucine-rich repeat protein that likely mediates protein interactions, possibly in the context of signal transduction. This Arabidopsis thaliana (Mouse-ear cress) protein is Plant intracellular Ras-group-related LRR protein 8 (PIRL8).